The following is a 126-amino-acid chain: Histone H2B type 1-K (126 aa).

Residues 1-12 (MPEPAKSAPAPK) are compositionally biased toward low complexity. The tract at residues 1–36 (MPEPAKSAPAPKKGSKKAVTKAQKKDGKKRKRSRKE) is disordered. Pro-2 is modified (N-acetylproline). Glu-3 is modified (ADP-ribosyl glutamic acid). An N6-(2-hydroxyisobutyryl)lysine; alternate modification is found at Lys-6. Lys-6 bears the N6-(beta-hydroxybutyryl)lysine; alternate mark. N6-acetyllysine; alternate is present on Lys-6. Position 6 is an N6-butyryllysine; alternate (Lys-6). Lys-6 is subject to N6-crotonyllysine; alternate. At Lys-6 the chain carries N6-lactoyllysine; alternate. Residue Lys-6 forms a Glycyl lysine isopeptide (Lys-Gly) (interchain with G-Cter in SUMO2); alternate linkage. Ser-7 carries the ADP-ribosylserine modification. Position 12 is an N6-(beta-hydroxybutyryl)lysine; alternate (Lys-12). N6-acetyllysine; alternate is present on residues Lys-12 and Lys-13. 2 positions are modified to N6-crotonyllysine; alternate: Lys-12 and Lys-13. Lys-12 carries the post-translational modification N6-lactoyllysine; alternate. The residue at position 13 (Lys-13) is an N6-(2-hydroxyisobutyryl)lysine; alternate. Ser-15 bears the Phosphoserine; by STK4/MST1 mark. 4 positions are modified to N6-acetyllysine; alternate: Lys-16, Lys-17, Lys-21, and Lys-24. N6-crotonyllysine; alternate occurs at positions 16, 17, 21, and 24. Lys-16, Lys-17, Lys-21, and Lys-24 each carry N6-lactoyllysine; alternate. 2 positions are modified to N6-(beta-hydroxybutyryl)lysine; alternate: Lys-17 and Lys-21. Lys-17 is modified (N6-glutaryllysine; alternate). Lys-21 and Lys-24 each carry N6-(2-hydroxyisobutyryl)lysine; alternate. Position 21 is an N6-butyryllysine; alternate (Lys-21). Lys-21 participates in a covalent cross-link: Glycyl lysine isopeptide (Lys-Gly) (interchain with G-Cter in SUMO2); alternate. An N6-(2-hydroxyisobutyryl)lysine modification is found at Lys-25. Lys-35 carries the N6-(2-hydroxyisobutyryl)lysine; alternate modification. Lys-35 carries the post-translational modification N6-(beta-hydroxybutyryl)lysine; alternate. The residue at position 35 (Lys-35) is an N6-crotonyllysine; alternate. Lys-35 bears the N6-glutaryllysine; alternate mark. At Lys-35 the chain carries N6-succinyllysine; alternate. A Glycyl lysine isopeptide (Lys-Gly) (interchain with G-Cter in ubiquitin); alternate cross-link involves residue Lys-35. Glu-36 bears the PolyADP-ribosyl glutamic acid mark. A Phosphoserine; by AMPK modification is found at Ser-37. N6-(2-hydroxyisobutyryl)lysine; alternate occurs at positions 44, 47, and 58. N6-lactoyllysine; alternate is present on Lys-44. Residues Lys-44 and Lys-47 each carry the N6-glutaryllysine; alternate modification. Lys-47 carries the N6-methyllysine; alternate modification. Lys-58 bears the N6,N6-dimethyllysine; alternate mark. Position 80 is a dimethylated arginine (Arg-80). Lys-86 carries the N6-(2-hydroxyisobutyryl)lysine; alternate modification. Lys-86 is subject to N6-(beta-hydroxybutyryl)lysine; alternate. At Lys-86 the chain carries N6-acetyllysine; alternate. Lys-86 bears the N6-lactoyllysine; alternate mark. Position 86 is an N6,N6,N6-trimethyllysine; alternate (Lys-86). An omega-N-methylarginine mark is found at Arg-87 and Arg-93. Lys-109 carries the post-translational modification N6-(2-hydroxyisobutyryl)lysine; alternate. Lys-109 carries the N6-lactoyllysine; alternate modification. Lys-109 bears the N6-glutaryllysine; alternate mark. An N6-methyllysine; alternate modification is found at Lys-109. An O-linked (GlcNAc) serine glycan is attached at Ser-113. Thr-116 carries the phosphothreonine modification. N6-(2-hydroxyisobutyryl)lysine; alternate is present on residues Lys-117 and Lys-121. N6-(beta-hydroxybutyryl)lysine; alternate occurs at positions 117 and 121. An N6-lactoyllysine; alternate mark is found at Lys-117 and Lys-121. Lys-117 and Lys-121 each carry N6-glutaryllysine; alternate. N6-succinyllysine; alternate occurs at positions 117 and 121. Lys-117 carries the N6-malonyllysine; alternate modification. Position 117 is an N6-methylated lysine; alternate (Lys-117). Lys-121 is covalently cross-linked (Glycyl lysine isopeptide (Lys-Gly) (interchain with G-Cter in ubiquitin); alternate).

The protein belongs to the histone H2B family. The nucleosome is a histone octamer containing two molecules each of H2A, H2B, H3 and H4 assembled in one H3-H4 heterotetramer and two H2A-H2B heterodimers. The octamer wraps approximately 147 bp of DNA. Post-translationally, monoubiquitination at Lys-35 (H2BK34Ub) by the MSL1/MSL2 dimer is required for histone H3 'Lys-4' (H3K4me) and 'Lys-79' (H3K79me) methylation and transcription activation at specific gene loci, such as HOXA9 and MEIS1 loci. Similarly, monoubiquitination at Lys-121 (H2BK120Ub) by the RNF20/40 complex gives a specific tag for epigenetic transcriptional activation and is also prerequisite for histone H3 'Lys-4' and 'Lys-79' methylation. It also functions cooperatively with the FACT dimer to stimulate elongation by RNA polymerase II. H2BK120Ub also acts as a regulator of mRNA splicing: deubiquitination by USP49 is required for efficient cotranscriptional splicing of a large set of exons. Phosphorylation at Ser-37 (H2BS36ph) by AMPK in response to stress promotes transcription. Phosphorylated on Ser-15 (H2BS14ph) by STK4/MST1 during apoptosis; which facilitates apoptotic chromatin condensation. Also phosphorylated on Ser-15 in response to DNA double strand breaks (DSBs), and in correlation with somatic hypermutation and immunoglobulin class-switch recombination. In terms of processing, glcNAcylation at Ser-113 promotes monoubiquitination of Lys-121. It fluctuates in response to extracellular glucose, and associates with transcribed genes. Post-translationally, ADP-ribosylated by PARP1 or PARP2 on Ser-7 (H2BS6ADPr) in response to DNA damage. H2BS6ADPr promotes recruitment of CHD1L. Mono-ADP-ribosylated on Glu-3 (H2BE2ADPr) by PARP3 in response to single-strand breaks. Poly ADP-ribosylation on Glu-36 (H2BE35ADPr) by PARP1 regulates adipogenesis: it inhibits phosphorylation at Ser-37 (H2BS36ph), thereby blocking expression of pro-adipogenetic genes. Crotonylation (Kcr) is specifically present in male germ cells and marks testis-specific genes in post-meiotic cells, including X-linked genes that escape sex chromosome inactivation in haploid cells. Crotonylation marks active promoters and enhancers and confers resistance to transcriptional repressors. It is also associated with post-meiotically activated genes on autosomes. In terms of processing, lactylated in macrophages by EP300/P300 by using lactoyl-CoA directly derived from endogenous or exogenous lactate, leading to stimulates gene transcription.

The protein resides in the nucleus. Its subcellular location is the chromosome. Core component of nucleosome. Nucleosomes wrap and compact DNA into chromatin, limiting DNA accessibility to the cellular machineries which require DNA as a template. Histones thereby play a central role in transcription regulation, DNA repair, DNA replication and chromosomal stability. DNA accessibility is regulated via a complex set of post-translational modifications of histones, also called histone code, and nucleosome remodeling. Functionally, has broad antibacterial activity. May contribute to the formation of the functional antimicrobial barrier of the colonic epithelium, and to the bactericidal activity of amniotic fluid. The polypeptide is Histone H2B type 1-K (Homo sapiens (Human)).